We begin with the raw amino-acid sequence, 818 residues long: Nibrin (818 aa).

Residues Tyr22–Leu70 form the FHA domain. BRCT domains follow at residues Ser91–Ser168 and Gly211–Ile301. Disordered stretches follow at residues Ala372–Arg716, Asn729–Val757, and Glu793–Arg818. The span at Lys379–Val405 shows a compositional bias: polar residues. A compositionally biased stretch (low complexity) spans Val409–Glu419. A compositionally biased stretch (polar residues) spans Ala444–Ser469. The Nuclear localization signal motif lies at Ser470–Arg475. Residues Glu515 to Ser530 show a composition bias toward polar residues. A compositionally biased stretch (acidic residues) spans Thr549–Glu571. The segment covering Gly586–Val602 has biased composition (polar residues). Positions Thr603–Lys612 are enriched in basic and acidic residues. The segment covering Asn613–Gln625 has biased composition (low complexity). Composition is skewed to polar residues over residues Val633–Arg644 and Ser653–Asn662. The segment covering Lys663–Val675 has biased composition (basic and acidic residues). Polar residues-rich tracts occupy residues Val678–Glu692 and Met699–Pro708. Positions Glu793–Phe808 are enriched in basic and acidic residues. Residues Gly804–Arg813 carry the FxF/Y motif motif.

This sequence belongs to the Nibrin family. In terms of assembly, component of the MRN complex composed of two heterodimers rad50 and mre11 associated with a single nbn.

It localises to the nucleus. It is found in the chromosome. Its subcellular location is the PML body. The protein resides in the telomere. Component of the MRN complex, which plays a central role in double-strand break (DSB) repair, DNA recombination, maintenance of telomere integrity and meiosis. The MRN complex is involved in the repair of DNA double-strand breaks (DSBs) via homologous recombination (HR), an error-free mechanism which primarily occurs during S and G2 phases. The complex (1) mediates the end resection of damaged DNA, which generates proper single-stranded DNA, a key initial steps in HR, and is (2) required for the recruitment of other repair factors and efficient activation of ATM and ATR upon DNA damage. The MRN complex possesses single-strand endonuclease activity and double-strand-specific 3'-5' exonuclease activity, which are provided by MRE11, to initiate end resection, which is required for single-strand invasion and recombination. Within the MRN complex, nbn acts as a protein-protein adapter, which specifically recognizes and binds phosphorylated proteins, promoting their recruitment to DNA damage sites. Recruits mre11 and rad50 components of the MRN complex to DSBs in response to DNA damage. Promotes the recruitment of PI3/PI4-kinase family members atm, atr, and probably DNA-PKcs to the DNA damage sites, activating their functions. Mediates the recruitment of phosphorylated rbbp8/CtIP to DSBs, leading to cooperation between the MRN complex and rbbp8/CtIP to initiate end resection. The MRN complex and rbbp8/CtIP are also required for chromosome alignment during metaphase. This Danio rerio (Zebrafish) protein is Nibrin (nbn).